Here is a 584-residue protein sequence, read N- to C-terminus: MALLHSTLIWIVYAIVVGILSIVASTFVYIYQTPRDRSAAVTTVCIFTLTALLATVLLLPVDVALVSSTTSEFGRRKDWATDHEVEKITYSLTVVYYFLYSLDAVLCLLIVPFTYFWYEEYDEVAYEDDGRFTRKPFWGAFKYTLVFILLTIILFLVGFFVPVAKDRKGAHFDLDYFKRLLTENHGERALTFALGLLIVMGIIVYVIYSSTGLAFFPISFIKSSPSISSPMLSANIESRLEENIERQRQLEGRCGGNPDHLSSKDRRELDSLVREERTLRRRKRLAEASRGQGRNFVIKVWYKLGAVFRPIKLLGGLLLLAISVMIWISMLLTCIDKAKNSVCKQKCGYILGKINIINPVNWVLVEAASVFPADYVIFIVLVLHLFTSSVVGIATIGIRFLWIRLLQIRKGHTSPQALLLATVMLTLITLALNYSISMIVVPQYATYGPQTFCDYPSIPASAPLDCSKHKEYLKPCSELANNPAAKAVCTPSVASTFLNRITLNFPFFGIVDFWAQFVFLGFSLIVLLISLFRTPRFDEQQMDEDAEEAEEEGLLAASGSRFNAAWQDTTGRTRDQRVRFRDDE.

Transmembrane regions (helical) follow at residues 8–28, 46–66, 93–113, 144–164, 189–209, 313–333, 350–370, 376–396, 421–441, and 509–529; these read LIWI…STFV, IFTL…VALV, TVVY…IVPF, TLVF…VPVA, ALTF…VIYS, LLGG…MLLT, ILGK…AASV, VIFI…IATI, ATVM…MIVV, and GIVD…VLLI.

Belongs to the LIMR family. LMBRD1 subfamily.

Its subcellular location is the lysosome membrane. Probable lysosomal cobalamin transporter. Required to export cobalamin from lysosomes allowing its conversion to cofactors. This chain is Probable lysosomal cobalamin transporter, found in Coccidioides immitis (strain RS) (Valley fever fungus).